Here is a 747-residue protein sequence, read N- to C-terminus: Catalase-peroxidase 1 (747 aa).

Basic and acidic residues predominate over residues 1–22; sequence MTDTSDARPPHSDDKTRSHSES. Positions 1–39 are disordered; it reads MTDTSDARPPHSDDKTRSHSESENPAIDSPEPKVHAPLT. The segment at residues 112–240 is a cross-link (tryptophyl-tyrosyl-methioninium (Trp-Tyr) (with M-266)); sequence WHAAGTYRIF…FGATTMGLIY (129 aa). The active-site Proton acceptor is His113. A cross-link (tryptophyl-tyrosyl-methioninium (Tyr-Met) (with W-112)) is located at residues 240–266; it reads YVNPEGPEGKPDPLAAAHDIRETFGRM. His281 lines the heme b pocket.

The protein belongs to the peroxidase family. Peroxidase/catalase subfamily. In terms of assembly, homodimer or homotetramer. It depends on heme b as a cofactor. In terms of processing, formation of the three residue Trp-Tyr-Met cross-link is important for the catalase, but not the peroxidase activity of the enzyme.

The enzyme catalyses H2O2 + AH2 = A + 2 H2O. It carries out the reaction 2 H2O2 = O2 + 2 H2O. Bifunctional enzyme with both catalase and broad-spectrum peroxidase activity. The chain is Catalase-peroxidase 1 from Mycolicibacterium vanbaalenii (strain DSM 7251 / JCM 13017 / BCRC 16820 / KCTC 9966 / NRRL B-24157 / PYR-1) (Mycobacterium vanbaalenii).